Here is a 1224-residue protein sequence, read N- to C-terminus: DNA-directed RNA polymerase subunit beta'' (1224 aa).

Residues cysteine 223, cysteine 297, cysteine 304, and cysteine 307 each coordinate Zn(2+).

Belongs to the RNA polymerase beta' chain family. RpoC2 subfamily. In plastids the minimal PEP RNA polymerase catalytic core is composed of four subunits: alpha, beta, beta', and beta''. When a (nuclear-encoded) sigma factor is associated with the core the holoenzyme is formed, which can initiate transcription. It depends on Zn(2+) as a cofactor.

It is found in the plastid. The protein resides in the chloroplast. It catalyses the reaction RNA(n) + a ribonucleoside 5'-triphosphate = RNA(n+1) + diphosphate. In terms of biological role, DNA-dependent RNA polymerase catalyzes the transcription of DNA into RNA using the four ribonucleoside triphosphates as substrates. The sequence is that of DNA-directed RNA polymerase subunit beta'' from Porphyra purpurea (Red seaweed).